The chain runs to 166 residues: MSAIIEAKKQQVDTIAEQLKNSVSTVIVDYRGLTVAEVTELRSQLREAGVEYKVYKNTMVRRAAEQAGIEGLDEFLTGPTAIATSTEDVVAPAKVIAGFAKEHEALEVKTGVMEGNVISAEEVKTVGSLPSHDGLVSMLLSVLQAPVRNFAYAVKAVGEQKEESAE.

It belongs to the universal ribosomal protein uL10 family. As to quaternary structure, part of the ribosomal stalk of the 50S ribosomal subunit. The N-terminus interacts with L11 and the large rRNA to form the base of the stalk. The C-terminus forms an elongated spine to which L12 dimers bind in a sequential fashion forming a multimeric L10(L12)X complex.

Its function is as follows. Forms part of the ribosomal stalk, playing a central role in the interaction of the ribosome with GTP-bound translation factors. The chain is Large ribosomal subunit protein uL10 from Staphylococcus epidermidis (strain ATCC 35984 / DSM 28319 / BCRC 17069 / CCUG 31568 / BM 3577 / RP62A).